Reading from the N-terminus, the 99-residue chain is DNA-binding protein Fis (99 aa).

Positions Q75–K94 form a DNA-binding region, H-T-H motif.

The protein belongs to the transcriptional regulatory Fis family. Homodimer.

Its function is as follows. Activates ribosomal RNA transcription. Plays a direct role in upstream activation of rRNA promoters. This is DNA-binding protein Fis from Pasteurella multocida (strain Pm70).